Reading from the N-terminus, the 86-residue chain is Large ribosomal subunit protein eL43 (86 aa).

The Zn(2+) site is built by Cys-38, Cys-41, Cys-56, and Cys-59. The segment at 38 to 59 (CPVCGRKAVRRISTGIWQCQKC) adopts a C4-type zinc-finger fold.

This sequence belongs to the eukaryotic ribosomal protein eL43 family. In terms of assembly, part of the 50S ribosomal subunit. Requires Zn(2+) as cofactor.

This chain is Large ribosomal subunit protein eL43, found in Thermococcus kodakarensis (strain ATCC BAA-918 / JCM 12380 / KOD1) (Pyrococcus kodakaraensis (strain KOD1)).